Here is a 183-residue protein sequence, read N- to C-terminus: Probable GTP-binding protein EngB (183 aa).

Residues 17-183 (DYPEVVFVGR…KKELLSRILN (167 aa)) form the EngB-type G domain. Residues 25–32 (GRSNVGKS), 51–55 (GRTRA), 69–72 (DVPG), 137–140 (TKID), and 166–168 (SSA) each bind GTP. Mg(2+)-binding residues include Ser-32 and Thr-53.

It belongs to the TRAFAC class TrmE-Era-EngA-EngB-Septin-like GTPase superfamily. EngB GTPase family. Requires Mg(2+) as cofactor.

Its function is as follows. Necessary for normal cell division and for the maintenance of normal septation. The polypeptide is Probable GTP-binding protein EngB (Aquifex aeolicus (strain VF5)).